The primary structure comprises 149 residues: Large ribosomal subunit protein uL15 (149 aa).

A disordered region spans residues 1-52 (MSELLKLHHLRPAPGSNKAKIRKGRGEASKGKTAGRGTKGTKARSTVPAGFE).

The protein belongs to the universal ribosomal protein uL15 family. Part of the 50S ribosomal subunit.

Functionally, binds to the 23S rRNA. This chain is Large ribosomal subunit protein uL15, found in Thermobifida fusca (strain YX).